The sequence spans 201 residues: 3-isopropylmalate dehydratase small subunit (201 aa).

The protein belongs to the LeuD family. LeuD type 1 subfamily. In terms of assembly, heterodimer of LeuC and LeuD.

It carries out the reaction (2R,3S)-3-isopropylmalate = (2S)-2-isopropylmalate. It functions in the pathway amino-acid biosynthesis; L-leucine biosynthesis; L-leucine from 3-methyl-2-oxobutanoate: step 2/4. In terms of biological role, catalyzes the isomerization between 2-isopropylmalate and 3-isopropylmalate, via the formation of 2-isopropylmaleate. This is 3-isopropylmalate dehydratase small subunit from Glaesserella parasuis serovar 5 (strain SH0165) (Haemophilus parasuis).